The chain runs to 415 residues: Mitogen-activated protein kinase kinae MST7 (415 aa).

The segment at 1-37 (MADPFAPRTMKRRNVKGLALTPAAPKPPPTAENAPIH) is disordered. The 266-residue stretch at 61–326 (LEVIKDLGSG…EELFERDPFV (266 aa)) folds into the Protein kinase domain. Residues 67–75 (LGSGNGGTV) and K90 each bind ATP. Residues 363-409 (DLLRSSDSPTATYHGDDRPLETPTSAYRVDPRRGPAEGSAGLADQVD) are disordered.

It belongs to the protein kinase superfamily. STE Ser/Thr protein kinase family. MAP kinase kinase subfamily. As to quaternary structure, homodimer. Interacts with the adapter protein MST50. Interacts with TRX2.

The catalysed reaction is L-seryl-[protein] + ATP = O-phospho-L-seryl-[protein] + ADP + H(+). The enzyme catalyses L-threonyl-[protein] + ATP = O-phospho-L-threonyl-[protein] + ADP + H(+). Mitogen-activated protein kinase kinase; part of the MST11-MST7-PMK1 MAP kinase (MAPK) cascade that is essential for appressorium formation, penetration and invasive growth. The MST11-MST7-PMK1 MAP kinase cascade transduces signals from the cell surface sensors MDB2 and SHO1 that recognize various surface signals such as surface hydrophobicity, cutin monomers, and rice leaf waxes. MST7 acts as the upstream MAPKK that directly phosphorylates MAP kinase PMK1. This chain is Mitogen-activated protein kinase kinae MST7, found in Pyricularia oryzae (strain 70-15 / ATCC MYA-4617 / FGSC 8958) (Rice blast fungus).